Reading from the N-terminus, the 120-residue chain is UPF0231 protein YacL (120 aa).

This sequence belongs to the UPF0231 family.

The protein is UPF0231 protein YacL of Salmonella agona (strain SL483).